We begin with the raw amino-acid sequence, 135 residues long: Putative hydrolase EbsB (135 aa).

The RNase H type-1 domain occupies 1–128 (MLRIYVDAAT…ADMLARQALQ (128 aa)). Positions 7, 45, 71, and 120 each coordinate Mg(2+).

This sequence belongs to the RNase H family. EbsB subfamily. Mg(2+) serves as cofactor.

It is found in the secreted. It localises to the cell wall. Functionally, seems to play some role in the cell surface expression of a chromosomally encoded receptor, named enterococcal binding substance (EBS), that mediates mating aggregate formation. Might interfere with the synthesis or assembly of EBS and function as a cell wall hydrolase. The polypeptide is Putative hydrolase EbsB (Enterococcus faecalis (strain ATCC 700802 / V583)).